A 1632-amino-acid chain; its full sequence is uncharacterized protein (1632 aa).

Polar residues predominate over residues 1–15 (MSNNKQTAAPAATSN). Residues 1–23 (MSNNKQTAAPAATSNEKAENGAE) are disordered. Topologically, residues 1–63 (MSNNKQTAAP…TKDAFKGKYR (63 aa)) are cytoplasmic. Residues 64 to 86 (VFYGNGLHTSIMFGAGTAALDLM) form a helical membrane-spanning segment. The Extracellular segment spans residues 87–1632 (TPGSFLPPFP…ESDGEEMSGE (1546 aa)). Residues N149 and N274 are each glycosylated (N-linked (GlcNAc...) asparagine; by host). Positions 516 to 538 (ELSSQLGDTDTKKEQKEKRSKQG) are disordered. N-linked (GlcNAc...) asparagine; by host glycosylation is found at N654, N719, and N797. Residues 838–890 (IKGTKKSDDGDSKTDGSGDMEDDFTSLAKMTNRKRKAGGKDGPSKKKKKDGAD) form a disordered region. Basic and acidic residues-rich tracts occupy residues 842–853 (KKSDDGDSKTDG) and 875–890 (GGKDGPSKKKKKDGAD). N-linked (GlcNAc...) asparagine; by host glycosylation is found at N1012, N1031, N1261, N1339, N1511, and N1546. Residues 1603–1632 (PSAMDVDEDEDEDMDDESDDESDGEEMSGE) are disordered. A compositionally biased stretch (acidic residues) spans 1607–1632 (DVDEDEDEDMDDESDDESDGEEMSGE).

It localises to the host membrane. This is an uncharacterized protein from Ostreid herpesvirus 1 (isolate France) (OsHV-1).